The following is a 158-amino-acid chain: Non-secretory ribonuclease (158 aa).

The signal sequence occupies residues methionine 1–alanine 27. C-linked (Man) tryptophan glycosylation occurs at tryptophan 34. Histidine 42 serves as the catalytic Proton acceptor. 3'-nitrotyrosine is present on tyrosine 60. Lysine 65–threonine 69 is a binding site for substrate. N-linked (GlcNAc...) asparagine glycans are attached at residues asparagine 86, asparagine 92, and asparagine 111. The active-site Proton donor is histidine 153.

This sequence belongs to the pancreatic ribonuclease family. As to quaternary structure, interacts with and forms a tight 1:1 complex with RNH1. Dimerization of two such complexes may occur.

It is found in the lysosome. Its subcellular location is the cytoplasmic granule. It catalyses the reaction an [RNA] containing cytidine + H2O = an [RNA]-3'-cytidine-3'-phosphate + a 5'-hydroxy-ribonucleotide-3'-[RNA].. It carries out the reaction an [RNA] containing uridine + H2O = an [RNA]-3'-uridine-3'-phosphate + a 5'-hydroxy-ribonucleotide-3'-[RNA].. In terms of biological role, this is a non-secretory ribonuclease. It is a pyrimidine specific nuclease with a slight preference for U. Cytotoxin and helminthotoxin. Possesses a wide variety of biological activities. The polypeptide is Non-secretory ribonuclease (RNASE2) (Saguinus labiatus (Red-chested mustached tamarin)).